The sequence spans 37 residues: MKVNPSVKRICEKCKVIRRNGRVRVICENPRHKQVQG.

This sequence belongs to the bacterial ribosomal protein bL36 family.

This chain is Large ribosomal subunit protein bL36A, found in Clavibacter sepedonicus (Clavibacter michiganensis subsp. sepedonicus).